Reading from the N-terminus, the 757-residue chain is Catalase-peroxidase (757 aa).

Residues 101–248 constitute a cross-link (tryptophyl-tyrosyl-methioninium (Trp-Tyr) (with M-274)); the sequence is WHSAGTYRIG…LAAVQMGLIY (148 aa). H102 functions as the Proton acceptor in the catalytic mechanism. The tract at residues 213–232 is disordered; that stretch reads VHHPDEHRGAKEKASKNSDS. Residues 248–274 constitute a cross-link (tryptophyl-tyrosyl-methioninium (Tyr-Met) (with W-101)); sequence YVNPEGPDGCPDPLASARDIRETFARM. A heme b-binding site is contributed by H289.

The protein belongs to the peroxidase family. Peroxidase/catalase subfamily. Homodimer or homotetramer. The cofactor is heme b. In terms of processing, formation of the three residue Trp-Tyr-Met cross-link is important for the catalase, but not the peroxidase activity of the enzyme.

It catalyses the reaction H2O2 + AH2 = A + 2 H2O. The enzyme catalyses 2 H2O2 = O2 + 2 H2O. Bifunctional enzyme with both catalase and broad-spectrum peroxidase activity. The sequence is that of Catalase-peroxidase from Xylella fastidiosa (strain M23).